The chain runs to 150 residues: Large ribosomal subunit protein bL9 (150 aa).

This sequence belongs to the bacterial ribosomal protein bL9 family.

Functionally, binds to the 23S rRNA. This Alteromonas mediterranea (strain DSM 17117 / CIP 110805 / LMG 28347 / Deep ecotype) protein is Large ribosomal subunit protein bL9.